Consider the following 473-residue polypeptide: Reticulon-4 receptor (473 aa).

A signal peptide spans 1–26; that stretch reads MKRASAGGSRLLAWVLWLQAWQVAAP. Intrachain disulfides connect C27–C33 and C31–C43. The LRRNT domain occupies 27-54; that stretch reads CPGACVCYNEPKVTTSCPQQGLQAVPVG. LRR repeat units follow at residues 55-79, 81-103, 104-128, 129-152, 153-176, 178-200, 202-224, 225-248, and 250-273; these read IPAASQRIFLHGNRISHVPAASFRA, RNLTILWLHSNVLARIDAAAFTG, LALLEQLDLSDNAQLRSVDPATFHG, LGRLHTLHLDRCGLQELGPGLFRG, LAALQYLYLQDNALQALPDDTFRD, GNLTHLFLHGNRISSVPERAFRG, HSLDRLLLHQNRVAHVHPHAFRD, LGRLMTLYLFANNLSALPTEALAP, and RALQYLRLNDNPWVCDCRARPLWA. Residue N82 is glycosylated (N-linked (GlcNAc...) asparagine). N-linked (GlcNAc...) asparagine glycosylation occurs at N179. The 51-residue stretch at 260–310 folds into the LRRCT domain; sequence NPWVCDCRARPLWAWLQKFRGSSSEVPCSLPQRLAGRDLKRLAANDLQGCA. 3 disulfides stabilise this stretch: C264–C287, C266–C335, and C309–C336. The segment at 346-447 is disordered; sequence VLEPGRPASA…GGGTGDSEGS (102 aa). Basic residues predominate over residues 413–429; it reads PRRRPGCSRKNRTRSHC. Gly residues predominate over residues 434–445; the sequence is AGSGGGGTGDSE. S447 carries the GPI-anchor amidated serine lipid modification. A propeptide spans 448 to 473 (removed in mature form); it reads GALPSLTCSLTPLGLALVLWTVLGPC.

This sequence belongs to the Nogo receptor family. Homodimer. Interacts with MAG. Interacts with RTN4. Interacts with NGFR. Interacts with LINGO1. Interacts with KIAA0319L. Interacts with OLFM1; this inhibits interaction with LINGO1 and NGFR. Interacts with OMG. In terms of processing, N-glycosylated. O-glycosylated. Contains terminal sialic acid groups on its glycan chains. As to expression, widespread in the brain but highest levels in the gray matter. Low levels in heart and kidney; not expressed in oligodendrocytes (white matter).

The protein localises to the cell membrane. It localises to the membrane raft. It is found in the cell projection. The protein resides in the dendrite. Its subcellular location is the axon. The protein localises to the perikaryon. Receptor for RTN4, OMG and MAG. Functions as a receptor for the sialylated gangliosides GT1b and GM1. Besides, functions as a receptor for chondroitin sulfate proteoglycans. Can also bind heparin. Intracellular signaling cascades are triggered via the coreceptor NGFR. Signaling mediates activation of Rho and downstream reorganization of the actin cytoskeleton. Mediates axonal growth inhibition. Plays a role in regulating axon regeneration and neuronal plasticity in the adult central nervous system. Plays a role in postnatal brain development. Required for normal axon migration across the brain midline and normal formation of the corpus callosum. Protects motoneurons against apoptosis; protection against apoptosis is probably mediated via interaction with MAG. Acts in conjunction with RTN4 and LINGO1 in regulating neuronal precursor cell motility during cortical development. Like other family members, plays a role in restricting the number dendritic spines and the number of synapses that are formed during brain development. The sequence is that of Reticulon-4 receptor (RTN4R) from Homo sapiens (Human).